A 1447-amino-acid chain; its full sequence is Sister chromatid cohesion protein PDS5 homolog B (1447 aa).

One copy of the HEAT repeat lies at Leu383–Tyr419. Residues Lys1117–Arg1447 form a disordered region. The residue at position 1136 (Lys1136) is an N6-acetyllysine. Positions Pro1137–Val1155 are enriched in polar residues. Phosphoserine occurs at positions 1140, 1162, 1166, 1176, 1182, and 1191. Over residues Ser1156 to Pro1167 the composition is skewed to low complexity. A compositionally biased stretch (basic and acidic residues) spans Gly1172 to Asn1184. 2 stretches are compositionally biased toward basic and acidic residues: residues Lys1196–Pro1214 and Gln1225–Pro1243. The span at Gly1245–His1254 shows a compositional bias: basic residues. The segment at residues Ser1249 to Glu1261 is a DNA-binding region (a.T hook 1). Thr1255 is subject to Phosphothreonine. Residues Ser1257 and Ser1259 each carry the phosphoserine modification. Residues Pro1265–Ile1274 are compositionally biased toward basic and acidic residues. Ser1283 bears the Phosphoserine mark. Residues Lys1287–Gly1299 constitute a DNA-binding region (a.T hook 2). Residues Thr1310–Ser1319 show a composition bias toward basic residues. Residues Ser1319 and Ser1334 each carry the phosphoserine modification. Basic residues predominate over residues Lys1342 to Gln1353. Positions Arg1355–Gln1372 are enriched in polar residues. Phosphoserine occurs at positions 1358 and 1366. Residue Thr1367 is modified to Phosphothreonine. Ser1369 is modified (phosphoserine). Thr1370 and Thr1381 each carry phosphothreonine. Residues Gln1372–Pro1384 constitute a DNA-binding region (a.T hook 3). Positions Ser1379–Lys1388 are enriched in low complexity. A phosphoserine mark is found at Ser1383 and Ser1417. Residues Ile1422 to Val1432 are compositionally biased toward acidic residues. A compositionally biased stretch (basic residues) spans Val1437 to Arg1447.

This sequence belongs to the PDS5 family. Interacts with the cohesin complex. Interacts with RAD21; the interaction is direct. Interacts with WAPL (via FGF motifs) or CDCA5 (via the FGF motif); the interaction is direct, cohesin-dependent and competitive. In terms of tissue distribution, widely expressed.

The protein localises to the nucleus. In terms of biological role, regulator of sister chromatid cohesion in mitosis which may stabilize cohesin complex association with chromatin. May couple sister chromatid cohesion during mitosis to DNA replication. Cohesion ensures that chromosome partitioning is accurate in both meiotic and mitotic cells and plays an important role in DNA repair. Plays a role in androgen-induced proliferative arrest in prostate cells. This chain is Sister chromatid cohesion protein PDS5 homolog B (PDS5B), found in Homo sapiens (Human).